Consider the following 133-residue polypeptide: MIVGLGSDLTDIRRIERMLARYGDRFVQRIFTDIERNRSESLQKKSSSYAKRFAAKEACAKALGTGIACGINWKDMGVINLPSGKPIMKLTNRAQMQLQKLLPSHHDAIIHLSMTDDFPWAQAFIIIEAFPRG.

Mg(2+) is bound by residues aspartate 8 and glutamate 57.

The protein belongs to the P-Pant transferase superfamily. AcpS family. It depends on Mg(2+) as a cofactor.

Its subcellular location is the cytoplasm. The catalysed reaction is apo-[ACP] + CoA = holo-[ACP] + adenosine 3',5'-bisphosphate + H(+). Functionally, transfers the 4'-phosphopantetheine moiety from coenzyme A to a Ser of acyl-carrier-protein. The sequence is that of Holo-[acyl-carrier-protein] synthase from Bartonella henselae (strain ATCC 49882 / DSM 28221 / CCUG 30454 / Houston 1) (Rochalimaea henselae).